The chain runs to 120 residues: Ribosome-binding factor A (120 aa).

The protein belongs to the RbfA family. In terms of assembly, monomer. Binds 30S ribosomal subunits, but not 50S ribosomal subunits or 70S ribosomes.

It is found in the cytoplasm. Functionally, one of several proteins that assist in the late maturation steps of the functional core of the 30S ribosomal subunit. Associates with free 30S ribosomal subunits (but not with 30S subunits that are part of 70S ribosomes or polysomes). Required for efficient processing of 16S rRNA. May interact with the 5'-terminal helix region of 16S rRNA. The chain is Ribosome-binding factor A from Desulforamulus reducens (strain ATCC BAA-1160 / DSM 100696 / MI-1) (Desulfotomaculum reducens).